The sequence spans 57 residues: UPF0391 membrane protein RB0084 (57 aa).

The next 2 helical transmembrane spans lie at 4–24 (WALIFFVISLIAGFLGFSGVS) and 33–53 (ILFYIAVIIFLVFLVLALAVG).

Belongs to the UPF0391 family.

Its subcellular location is the cell membrane. The chain is UPF0391 membrane protein RB0084 from Rhizobium meliloti (strain 1021) (Ensifer meliloti).